Here is a 431-residue protein sequence, read N- to C-terminus: Phosphomethylpyrimidine synthase (431 aa).

Substrate-binding positions include N66, M95, Y124, H163, 185-187, 226-229, and E265; these read SRG and DGLR. H269 contributes to the Zn(2+) binding site. Residue Y292 coordinates substrate. H333 is a binding site for Zn(2+). Residues C408, C411, and C415 each coordinate [4Fe-4S] cluster.

It belongs to the ThiC family. The cofactor is [4Fe-4S] cluster.

It carries out the reaction 5-amino-1-(5-phospho-beta-D-ribosyl)imidazole + S-adenosyl-L-methionine = 4-amino-2-methyl-5-(phosphooxymethyl)pyrimidine + CO + 5'-deoxyadenosine + formate + L-methionine + 3 H(+). It participates in cofactor biosynthesis; thiamine diphosphate biosynthesis. Its function is as follows. Catalyzes the synthesis of the hydroxymethylpyrimidine phosphate (HMP-P) moiety of thiamine from aminoimidazole ribotide (AIR) in a radical S-adenosyl-L-methionine (SAM)-dependent reaction. This chain is Phosphomethylpyrimidine synthase, found in Dehalococcoides mccartyi (strain CBDB1).